Reading from the N-terminus, the 868-residue chain is DNA mismatch repair protein MutS (868 aa).

Residue 620-627 (GPNMGGKS) participates in ATP binding.

It belongs to the DNA mismatch repair MutS family.

In terms of biological role, this protein is involved in the repair of mismatches in DNA. It is possible that it carries out the mismatch recognition step. This protein has a weak ATPase activity. The sequence is that of DNA mismatch repair protein MutS from Desulforamulus reducens (strain ATCC BAA-1160 / DSM 100696 / MI-1) (Desulfotomaculum reducens).